Here is a 1138-residue protein sequence, read N- to C-terminus: Tyrosine-protein kinase receptor Tie-1 (1138 aa).

The first 21 residues, 1–21, serve as a signal peptide directing secretion; sequence MVWRVPPFLLPILFLASHVGA. The Extracellular segment spans residues 22 to 759; the sequence is AVDLTLLANL…SRAAEEGLDQ (738 aa). The Ig-like C2-type 1 domain occupies 43-105; sequence CVSGEAGAGR…PSDLVGVFSC (63 aa). Residues Asn83 and Asn161 are each glycosylated (N-linked (GlcNAc...) asparagine). EGF-like domains are found at residues 214 to 256, 258 to 303, and 305 to 345; these read GCGA…TRCE, ACRE…SQCQ, and ACAP…VHCE. Cystine bridges form between Cys228-Cys237, Cys231-Cys244, and Cys246-Cys255. Disulfide bonds link Cys315-Cys327, Cys321-Cys333, and Cys335-Cys344. Positions 372–426 constitute an Ig-like C2-type 2 domain; sequence CAAAGNPFPVRGSIELRKPDGTVLLSTKAIVEPEKTTAEFEVPRLVLADSGFWEC. Fibronectin type-III domains lie at 446–545, 548–642, and 646–739; these read PPVP…CPEP, QPWL…LPPS, and APRH…TLGN. Asn503, Asn596, and Asn709 each carry an N-linked (GlcNAc...) asparagine glycan. The chain crosses the membrane as a helical span at residues 760–784; that stretch reads QLILAVVGSVSATCLTILAALLTLV. The Cytoplasmic portion of the chain corresponds to 785-1138; it reads CIRRSCLHRR…AGIDATAEEA (354 aa). The region spanning 839–1118 is the Protein kinase domain; it reads ITFEDLIGEG…RMLEARKAYV (280 aa). ATP is bound by residues 845–853 and Lys870; that span reads IGEGNFGQV. Asp979 (proton acceptor) is an active-site residue. Tyr1007 is subject to Phosphotyrosine; by autocatalysis.

Belongs to the protein kinase superfamily. Tyr protein kinase family. Tie subfamily. In terms of assembly, heterodimer with TEK/TIE2. Interacts with SVEP1 (via C-terminus). Phosphorylated on tyrosine residues in response to ANGPT1, most likely by TEK/TIE2. As to expression, specifically expressed in developing vascular endothelial cells.

The protein resides in the cell membrane. It carries out the reaction L-tyrosyl-[protein] + ATP = O-phospho-L-tyrosyl-[protein] + ADP + H(+). In terms of biological role, transmembrane tyrosine-protein kinase that may modulate TEK/TIE2 activity and contribute to the regulation of angiogenesis. This chain is Tyrosine-protein kinase receptor Tie-1 (TIE1), found in Homo sapiens (Human).